Here is a 320-residue protein sequence, read N- to C-terminus: Protein HEXIM1 (320 aa).

The segment at 1 to 124 is disordered; the sequence is MAEPLLSEFQ…RRRPSKKKRL (124 aa). The span at 9 to 19 shows a compositional bias: polar residues; the sequence is FQHQPQTSNCT. Basic and acidic residues predominate over residues 24–47; sequence VHEERNPDRPPGAEERVPEEDSRW. A Phosphoserine modification is found at Ser98. Positions 109–124 are enriched in basic residues; that stretch reads VGKKKHRRRPSKKKRL. Positions 111-138 are basic region; mediates nuclear localization and interaction with 7SK snRNA and NR3C1; sequence KKKHRRRPSKKKRLWKPYYTLTWEEKKK. Residues 163-166 form an interaction with P-TEFb region; the sequence is PYNT. Positions 171 to 211 are autoinhibitory acidic region; in absence of 7SK snRNA interacts with the basic region preventing interaction with P-TEFb and modulating subcellular localization; the sequence is MDDHDQEEPDLKTGLYPKRAAAKSDDTSDEDFMEEAGEEDG. A disordered region spans residues 174–223; sequence HDQEEPDLKTGLYPKRAAAKSDDTSDEDFMEEAGEEDGGSDGMGGDGSEF. Position 194 is a phosphoserine (Ser194). A Phosphothreonine modification is found at Thr197. Over residues 197 to 212 the composition is skewed to acidic residues; that stretch reads TSDEDFMEEAGEEDGG. A phosphoserine mark is found at Ser198, Ser213, and Ser221. The stretch at 244–310 forms a coiled coil; that stretch reads SKQELIKEYL…LTENELHRQQ (67 aa). The tract at residues 247-275 is mediates interaction with CCNT1; it reads ELIKEYLELEKCLSRMEDENNRLRLESQR. The tract at residues 271–316 is required for inhibition of ESR1-dependent transcription; it reads LESQRLDGDDARVRELELELDRLRAENLQLLTENELHRQQERAPLS.

Belongs to the HEXIM family. In terms of assembly, homooligomer and heterooligomer with HEXIM2; probably dimeric. Core component of the 7SK RNP complex, at least composed of 7SK RNA, LARP7, MEPCE, HEXIM1 (or HEXIM2) and P-TEFb (composed of CDK9 and CCNT1/cyclin-T1). Interacts with the N-CoR complex through NCOR1. Interacts with ESR1 and NR3C1. May interact with NF-kappa-B through RELA. Interacts with CCNT2; mediates formation of a tripartite complex with KPNA2. Part of the HDP-RNP complex composed of at least HEXIM1, PRKDC, XRCC5, XRCC6, paraspeckle proteins (SFPQ, NONO, PSPC1, RBM14, and MATR3) and NEAT1 non-coding RNA.

It is found in the nucleus. Its subcellular location is the cytoplasm. Its function is as follows. Transcriptional regulator which functions as a general RNA polymerase II transcription inhibitor. Core component of the 7SK RNP complex: in cooperation with 7SK snRNA sequesters P-TEFb in a large inactive 7SK snRNP complex preventing RNA polymerase II phosphorylation and subsequent transcriptional elongation. May also regulate NF-kappa-B, ESR1, NR3C1 and CIITA-dependent transcriptional activity. Plays a role in the regulation of DNA virus-mediated innate immune response by assembling into the HDP-RNP complex, a complex that serves as a platform for IRF3 phosphorylation and subsequent innate immune response activation through the cGAS-STING pathway. The chain is Protein HEXIM1 (HEXIM1) from Bos taurus (Bovine).